The following is a 378-amino-acid chain: Carbamoyl phosphate synthase small chain (378 aa).

A CPSase region spans residues methionine 1 to aspartate 189. L-glutamine is bound by residues serine 47, glycine 241, and glycine 243. Positions histidine 193–arginine 378 constitute a Glutamine amidotransferase type-1 domain. Cysteine 269 functions as the Nucleophile in the catalytic mechanism. L-glutamine is bound by residues leucine 270, glutamine 273, asparagine 311, glycine 313, and phenylalanine 314. Catalysis depends on residues histidine 353 and glutamate 355.

This sequence belongs to the CarA family. In terms of assembly, composed of two chains; the small (or glutamine) chain promotes the hydrolysis of glutamine to ammonia, which is used by the large (or ammonia) chain to synthesize carbamoyl phosphate. Tetramer of heterodimers (alpha,beta)4.

It catalyses the reaction hydrogencarbonate + L-glutamine + 2 ATP + H2O = carbamoyl phosphate + L-glutamate + 2 ADP + phosphate + 2 H(+). The enzyme catalyses L-glutamine + H2O = L-glutamate + NH4(+). It functions in the pathway amino-acid biosynthesis; L-arginine biosynthesis; carbamoyl phosphate from bicarbonate: step 1/1. It participates in pyrimidine metabolism; UMP biosynthesis via de novo pathway; (S)-dihydroorotate from bicarbonate: step 1/3. Its function is as follows. Small subunit of the glutamine-dependent carbamoyl phosphate synthetase (CPSase). CPSase catalyzes the formation of carbamoyl phosphate from the ammonia moiety of glutamine, carbonate, and phosphate donated by ATP, constituting the first step of 2 biosynthetic pathways, one leading to arginine and/or urea and the other to pyrimidine nucleotides. The small subunit (glutamine amidotransferase) binds and cleaves glutamine to supply the large subunit with the substrate ammonia. In Pseudomonas putida (strain ATCC 47054 / DSM 6125 / CFBP 8728 / NCIMB 11950 / KT2440), this protein is Carbamoyl phosphate synthase small chain.